A 140-amino-acid chain; its full sequence is Class I hydrophobin C (140 aa).

A signal peptide spans 1 to 23; it reads MKFFVPAFLFAATAMALPGSGSA. 4 disulfide bridges follow: C41-C114, C49-C108, C50-C85, and C115-C133.

The protein belongs to the fungal hydrophobin family.

The protein resides in the secreted. The protein localises to the cell wall. Its function is as follows. Aerial growth, conidiation, and dispersal of filamentous fungi in the environment rely upon a capability of their secreting small amphipathic proteins called hydrophobins (HPBs) with low sequence identity. Class I can self-assemble into an outermost layer of rodlet bundles on aerial cell surfaces, conferring cellular hydrophobicity that supports fungal growth, development and dispersal; whereas Class II form highly ordered films at water-air interfaces through intermolecular interactions but contribute nothing to the rodlet structure. In P.expansum, hydrophobins contribute to germination, tolerance to cold stress and mycotoxins patulin and citrinin production. HfbC is involved in the virulence on apple. The protein is Class I hydrophobin C of Penicillium expansum (Blue mold rot fungus).